The sequence spans 295 residues: Energy-coupling factor transporter ATP-binding protein EcfA2 (295 aa).

The ABC transporter domain occupies 3–246 (ITFKQVDFTY…PAWLTAHQLG (244 aa)). Residue 40–47 (GHTGSGKS) coordinates ATP.

This sequence belongs to the ABC transporter superfamily. Energy-coupling factor EcfA family. In terms of assembly, forms a stable energy-coupling factor (ECF) transporter complex composed of 2 membrane-embedded substrate-binding proteins (S component), 2 ATP-binding proteins (A component) and 2 transmembrane proteins (T component).

The protein localises to the cell membrane. Its function is as follows. ATP-binding (A) component of a common energy-coupling factor (ECF) ABC-transporter complex. Unlike classic ABC transporters this ECF transporter provides the energy necessary to transport a number of different substrates. The chain is Energy-coupling factor transporter ATP-binding protein EcfA2 from Lactiplantibacillus plantarum (strain ATCC BAA-793 / NCIMB 8826 / WCFS1) (Lactobacillus plantarum).